We begin with the raw amino-acid sequence, 564 residues long: Septation ring formation regulator EzrA (564 aa).

Residues 1–4 (MVLY) lie on the Extracellular side of the membrane. The helical transmembrane segment at 5–23 (IILAIIVIILIAVGVLFYL) threads the bilayer. Over 24 to 564 (RSNKRQIIEK…KHIEEEVIKQ (541 aa)) the chain is Cytoplasmic. 5 coiled-coil regions span residues 99–138 (SFNA…YKDN), 190–223 (DGNY…LIRE), 271–300 (LISR…LIEH), 350–435 (VRQF…RRLL), and 471–550 (VKQL…ESVE).

Belongs to the EzrA family.

The protein localises to the cell membrane. Its function is as follows. Negative regulator of FtsZ ring formation; modulates the frequency and position of FtsZ ring formation. Inhibits FtsZ ring formation at polar sites. Interacts either with FtsZ or with one of its binding partners to promote depolymerization. The protein is Septation ring formation regulator EzrA of Staphylococcus aureus (strain Mu3 / ATCC 700698).